We begin with the raw amino-acid sequence, 693 residues long: Elongation factor G (693 aa).

A tr-type G domain is found at 8-282 (EKTRNIGIMA…AVIDYLPSPL (275 aa)). GTP is bound by residues 17 to 24 (AHVDAGKT), 81 to 85 (DTPGH), and 135 to 138 (NKMD).

Belongs to the TRAFAC class translation factor GTPase superfamily. Classic translation factor GTPase family. EF-G/EF-2 subfamily.

It localises to the cytoplasm. Functionally, catalyzes the GTP-dependent ribosomal translocation step during translation elongation. During this step, the ribosome changes from the pre-translocational (PRE) to the post-translocational (POST) state as the newly formed A-site-bound peptidyl-tRNA and P-site-bound deacylated tRNA move to the P and E sites, respectively. Catalyzes the coordinated movement of the two tRNA molecules, the mRNA and conformational changes in the ribosome. The chain is Elongation factor G from Streptococcus pneumoniae serotype 2 (strain D39 / NCTC 7466).